The chain runs to 95 residues: Co-chaperonin GroES (95 aa).

It belongs to the GroES chaperonin family. In terms of assembly, heptamer of 7 subunits arranged in a ring. Interacts with the chaperonin GroEL.

The protein resides in the cytoplasm. Its function is as follows. Together with the chaperonin GroEL, plays an essential role in assisting protein folding. The GroEL-GroES system forms a nano-cage that allows encapsulation of the non-native substrate proteins and provides a physical environment optimized to promote and accelerate protein folding. GroES binds to the apical surface of the GroEL ring, thereby capping the opening of the GroEL channel. The chain is Co-chaperonin GroES from Rickettsia conorii (strain ATCC VR-613 / Malish 7).